Reading from the N-terminus, the 82-residue chain is Envelope small membrane protein (82 aa).

At 1–19 the chain is on the virion surface side; that stretch reads MTFPRALTVIDDNGMVISI. Residues 20-40 form a helical membrane-spanning segment; it reads IFWLLLIIILILFSIALLNII. The Intravirion segment spans residues 41–82; the sequence is KLCMVCCNLGRTVVVIPVRHAYDAYKNFMRINAYNHNEALLV.

It belongs to the alphacoronaviruses E protein family. Homopentamer. Interacts with membrane protein M in the budding compartment of the host cell, which is located between endoplasmic reticulum and the Golgi complex. Interacts with Nucleoprotein.

The protein localises to the host Golgi apparatus membrane. Plays a central role in virus morphogenesis and assembly. Acts as a viroporin and self-assembles in host membranes forming pentameric protein-lipid pores that allow ion transport. Also plays a role in the induction of apoptosis. This chain is Envelope small membrane protein, found in Canine coronavirus (strain BGF10) (CCoV).